The following is a 103-amino-acid chain: UPF0058 protein MJ1205 (103 aa).

It belongs to the UPF0058 family.

This Methanocaldococcus jannaschii (strain ATCC 43067 / DSM 2661 / JAL-1 / JCM 10045 / NBRC 100440) (Methanococcus jannaschii) protein is UPF0058 protein MJ1205.